We begin with the raw amino-acid sequence, 166 residues long: Transcriptional repressor NrdR (166 aa).

A zinc finger lies at 3-34 (CPFCGFSDSRVLDSRPTVEGNSIRRRRECCGC). The ATP-cone domain occupies 49 to 139 (LIVVKKDGRR…VYREFRDAES (91 aa)).

Belongs to the NrdR family. The cofactor is Zn(2+).

In terms of biological role, negatively regulates transcription of bacterial ribonucleotide reductase nrd genes and operons by binding to NrdR-boxes. In Pelotomaculum thermopropionicum (strain DSM 13744 / JCM 10971 / SI), this protein is Transcriptional repressor NrdR.